The sequence spans 1086 residues: SNITAGKQQEGATCGAVRAPYVVTEAPPKIDIKVGTNWKKVLVDTGADRTIVRYHDNSGIPTGRIKLQGIGGIIEGEKWDKVVIQYKEKRIEGTIVVLPSSPVEVLGRDNMAKLDIGIIMANLEEKKIPITQVKLKEGCKGPHIAQWPLTQEKLEGLKEIVDKLEKEGKVGRAPPHWTCNTPIFCIKKKSGKWRMLIDFRELNKQTEDLAEAQLGLPHPGGLQKKKHVTILDIGDAYFTIPLYEPYRPYTCFTMLSPNNLGPCTRYYWKVLPQGWKLSPSVYQFTMQEILRDWIAKHPMIQFGIYMDDIYIGSDLDIMKHREIVEELASYIAQYGFMLPEEKRQEGYPAKWLGFELHPEKWRFQKHTLPEIKEGTITLNKLQKLVGDLVWRQSLIGKSIPNILKLMEGDRALQSERRIELRHVKEWEECRRKLAEMEGNYYDEEKDVYGQIDWGDKAIEYIVFQERGKPLWVNVVHNIKNLSQSQQIIKAAQKLTQEVIIRIGKIPWILLPGKEEDWILELQIGNITWMPSFWSCYRGSIRWKKRNVITEVVEGPTYYTDGGKKNGKGSLGFIASTGVKFRKHEEGTNQQLELRAIEEACKQGPEKMNIVTDSRYAYEFMRRNWDEEVIKNPIQARIMKLVHDKEQIGVHWVPGHKGIPQNEEIDKYISEIFLAREGSGILPKRAEDAGYDLICPQEVCIPAGQVRKIPINLRINLKEDQWAMVGTKSSFASKGVFVQGGIIDSGYQGIIQVVVYNSNDKEVIIPQGRKFAQLILMPLIHEDLEAWGETRRTERGNQGFGSTGAYWIENIPLAEEDHSKWHQDAGSLHLDFGIPRTAAEDIVQQCEVCQENKMPSTIRGSNRRGIDHWQVDYTHYEDKIILVWVETNSGLIYAERVKGETGQEFRIMTIRWYGLFAPKSLQSDNGPAFVAEPTQLLMKYLGITHTTGIPWNPQSQALVERTHQTLKNTIEKFVSMFASFDSAIAAALITLNIKRKGGLGTSPMDIFIFNKEQQRIQQQSTRNQSKFRFCYYRVRKRGHPGEWLGPTQVLWEGEGAIVIKDKNLEKYLVIAKKDVKFIPQPKEIQTE.

The 72-residue stretch at 39–110 folds into the Peptidase A2 domain; the sequence is KKVLVDTGAD…SPVEVLGRDN (72 aa). Asp44 is a catalytic residue. One can recognise a Reverse transcriptase domain in the interval 167 to 356; the sequence is EGKVGRAPPH…YPAKWLGFEL (190 aa). Positions 551-673 constitute an RNase H type-1 domain; that stretch reads VVEGPTYYTD…IDKYISEIFL (123 aa). An Integrase-type zinc finger spans residues 808-849; it reads ENIPLAEEDHSKWHQDAGSLHLDFGIPRTAAEDIVQQCEVCQ. The Zn(2+) site is built by His817, His821, Cys845, and Cys848. Residues 850 to 1010 enclose the Integrase catalytic domain; it reads ENKMPSTIRG…SPMDIFIFNK (161 aa). Residues 1027-1079 constitute a DNA-binding region (integrase-type); that stretch reads RFCYYRVRKRGHPGEWLGPTQVLWEGEGAIVIKDKNLEKYLVIAKKDVKFIPQ.

This sequence belongs to the retroviral Pol polyprotein family. Post-translationally, cleavage sites that yield the mature proteins remain to be determined.

It catalyses the reaction Endohydrolysis of RNA in RNA/DNA hybrids. Three different cleavage modes: 1. sequence-specific internal cleavage of RNA. Human immunodeficiency virus type 1 and Moloney murine leukemia virus enzymes prefer to cleave the RNA strand one nucleotide away from the RNA-DNA junction. 2. RNA 5'-end directed cleavage 13-19 nucleotides from the RNA end. 3. DNA 3'-end directed cleavage 15-20 nucleotides away from the primer terminus.. It carries out the reaction 3'-end directed exonucleolytic cleavage of viral RNA-DNA hybrid.. The catalysed reaction is dUTP + H2O = dUMP + diphosphate + H(+). The enzyme catalyses DNA(n) + a 2'-deoxyribonucleoside 5'-triphosphate = DNA(n+1) + diphosphate. Its function is as follows. During replicative cycle of retroviruses, the reverse-transcribed viral DNA is integrated into the host chromosome by the viral integrase enzyme. RNase H activity is associated with the reverse transcriptase. In Ovis aries (Sheep), this protein is Pol polyprotein (pol).